The chain runs to 234 residues: Large ribosomal subunit protein uL1 (234 aa).

The protein belongs to the universal ribosomal protein uL1 family. In terms of assembly, part of the 50S ribosomal subunit.

Binds directly to 23S rRNA. The L1 stalk is quite mobile in the ribosome, and is involved in E site tRNA release. Its function is as follows. Protein L1 is also a translational repressor protein, it controls the translation of the L11 operon by binding to its mRNA. The chain is Large ribosomal subunit protein uL1 from Salmonella arizonae (strain ATCC BAA-731 / CDC346-86 / RSK2980).